A 274-amino-acid polypeptide reads, in one-letter code: Oxidoreductase BOA17 (274 aa).

Residues L14, T32, D57, N84, and K117 each contribute to the NADP(+) site. Residues S135 and Y149 each act as proton donor in the active site. NADP(+) contacts are provided by Y149, K153, I182, and T184. K153 functions as the Lowers pKa of active site Tyr in the catalytic mechanism.

This sequence belongs to the short-chain dehydrogenases/reductases (SDR) family.

The protein operates within polyketide biosynthesis. Its function is as follows. Oxidoreductase; part of the gene cluster B that mediates the biosynthesis of botcinic acid and its botcinin derivatives, acetate-derived polyketides that contribute to virulence when combined with the sesquiterpene botrydial. Botcinic acid and its derivatives have been shown to induce chlorosis and necrosis during host plant infection, but also have antifungal activities. Two polyketide synthases, BOA6 and BOA9, are involved in the biosynthesis of botcinins. BOA6 mediates the formation of the per-methylated tetraketide core by condensation of four units of malonyl-CoA with one unit of acetyl-CoA, which would be methylated in activated methylene groups to yield a bicyclic acid intermediate that could then either be converted to botrylactone derivatives or lose the starter acetate unit through a retro-Claisen type C-C bond cleavage to yield botcinin derivatives. The second polyketide synthase, BOA9, is probably required for the biosynthesis of the tetraketide side chain of botcinins. The methyltransferase (MT) domain within BOA6 is probably responsible for the incorporation of four methyl groups. The trans-enoyl reductase BOA5 might take over the enoyl reductase function of BOA6 that misses an ER domain. The monooxygenases BOA2, BOA3 and BOA4 might be involved in further hydroxylations at C4, C5 and C8, whereas BOA7, close to BOA9, could potentially be involved in the hydroxylation at C4 in the side chain of botcinins. The polypeptide is Oxidoreductase BOA17 (Botryotinia fuckeliana (strain B05.10) (Noble rot fungus)).